A 60-amino-acid polypeptide reads, in one-letter code: Ferredoxin-1 (60 aa).

2 4Fe-4S ferredoxin-type domains span residues 2–27 (LYITEECTYCGACEPECPVTAISAGD) and 28–60 (DIYVIDANTCNECAGLDEQACVAVCPAECIVQG). Residues cysteine 8, cysteine 11, cysteine 14, cysteine 18, cysteine 37, cysteine 40, cysteine 48, and cysteine 52 each coordinate [4Fe-4S] cluster.

The cofactor is [4Fe-4S] cluster.

Its function is as follows. Ferredoxins are iron-sulfur proteins that transfer electrons in a wide variety of metabolic reactions. The chain is Ferredoxin-1 from Chlorobium limicola.